The chain runs to 497 residues: Probable cytosol aminopeptidase (497 aa).

Residues lysine 263 and aspartate 268 each coordinate Mn(2+). Residue lysine 275 is part of the active site. The Mn(2+) site is built by aspartate 286, aspartate 345, and glutamate 347. Arginine 349 is a catalytic residue.

This sequence belongs to the peptidase M17 family. It depends on Mn(2+) as a cofactor.

It localises to the cytoplasm. It carries out the reaction Release of an N-terminal amino acid, Xaa-|-Yaa-, in which Xaa is preferably Leu, but may be other amino acids including Pro although not Arg or Lys, and Yaa may be Pro. Amino acid amides and methyl esters are also readily hydrolyzed, but rates on arylamides are exceedingly low.. It catalyses the reaction Release of an N-terminal amino acid, preferentially leucine, but not glutamic or aspartic acids.. Presumably involved in the processing and regular turnover of intracellular proteins. Catalyzes the removal of unsubstituted N-terminal amino acids from various peptides. This is Probable cytosol aminopeptidase from Brucella ovis (strain ATCC 25840 / 63/290 / NCTC 10512).